The following is a 486-amino-acid chain: Transcription enhancer factor-like protein egl-44 (486 aa).

Residues glycine 47–glycine 57 show a composition bias toward low complexity. The tract at residues glycine 47–leucine 87 is disordered. The segment at residues serine 88 to aspartate 164 is a DNA-binding region (TEA). Positions glutamate 165–serine 188 are disordered.

Interacts (via N-terminus) with egl-46 (via C-terminus); the interaction is direct; the interaction may regulate transcription. Interacts with yap-1 (via WW domain); the interaction may regulate transcription. In terms of tissue distribution, expressed in HSN neurons in embryos and in the FLP neurons from the L1 stage through to adults. Not expressed in touch cells. Also expressed in larval hypodermis, intestine, pharyngeal muscle and other neurons. In adults expression is lost from some neurons, is weaker in the hypodermis but remains in the intestine. Expressed in HOB neuron, ray neurons RnA and RnB, and the ray structural cell, Rnst; rays are male-specific genital sensilla (simple sense organs).

The protein resides in the nucleus. Transcription factor. Binds to DNA sequence motif 5'-CATNNNNAAATGCAT-3' as a heterodimer with egl-46. Represses expression of genes involved in differentiation of touch receptor neurons (TRN), probably acting as a heterodimer with egl-46, perhaps by occupying similar cis-regulatory elements as an unc-86/mec-3 heterodimer. Plays a role in cell fate specification of neurons, including the hook neuron HOB, and touch receptor neurons. Involved in male mating behavior, acting in concert with egl-46, via modulation of expression of polycystins lov-1 and pkd-2, homeodomain protein ceh-26, and neuropeptide-like protein nlp-8. Acts upstream of egl-46 to prevent touch cell differentiation in FLP neurons. Plays a role in neuron differentiation by repressing the expression of zag-1 in FLP neurons, probably acting as a heterodimer with egl-46; because zag-1 represses expression of egl-46 and egl-44, together these proteins form a bistable, negative-feedback loop that regulates the choice between neuronal fates. Also promotes HSN neuron development. In association with egl-46, regulates cell cycle exit in the neuronal Q cell lineage. Plays a role in specifying commissural dendrites of the PVD nociceptive neurons, acting in concert with egl-46. May be involved in thermal stress response downstream of yap-1. The protein is Transcription enhancer factor-like protein egl-44 (egl-44) of Caenorhabditis elegans.